We begin with the raw amino-acid sequence, 237 residues long: Probable Bax inhibitor 1 (237 aa).

The Cytoplasmic portion of the chain corresponds to 1–29 (MNVFDRNINFDSLFKFSQISHSTQVHLKN). A helical membrane pass occupies residues 30-50 (VYSSLAVCMFVAAAGSYVHVV). The Lumenal segment spans residues 51–52 (TR). The helical transmembrane segment at 53–73 (LFQGGMLSVLGSLGMMFWLAM) threads the bilayer. Over 74–86 (TPHNSETEKKRLA) the chain is Cytoplasmic. The helical transmembrane segment at 87–107 (ILAGFAFLTGVGLCPTLDFVI) threads the bilayer. At 108–112 (AINPS) the chain is on the lumenal side. The helical transmembrane segment at 113 to 133 (IIVTAFLGTSVIFVCFTLSAL) threads the bilayer. At 134–139 (YAKRRS) the chain is on the cytoplasmic side. The chain crosses the membrane as a helical span at residues 140-160 (YLFLGGTLMSGLSILFLMSMM). At 161–166 (NMFFGS) the chain is on the lumenal side. A helical transmembrane segment spans residues 167 to 187 (VMLFKAHMYLGLLIMCGFVLX). Residues 188 to 206 (DTQLIIEKAENGDKDYVWH) lie on the Cytoplasmic side of the membrane. The helical intramembrane region spans 207-227 (SVDLFLDFITIFRKLMVILAL). At 228-237 (NDKDKKKEKK) the chain is on the cytoplasmic side.

This sequence belongs to the BI1 family. As to expression, highly abundant in testis.

The protein resides in the endoplasmic reticulum membrane. Its function is as follows. Suppressor of apoptosis. Modulates unfolded protein response signaling. Modulate ER calcium homeostasis by acting as a calcium-leak channel. The chain is Probable Bax inhibitor 1 (tmbim6) from Paralichthys olivaceus (Bastard halibut).